Consider the following 391-residue polypeptide: Phosphoglycerate kinase (391 aa).

Residues 21-23, arginine 36, 59-62, arginine 113, and arginine 146 contribute to the substrate site; these read DLN and HRGR. ATP is bound by residues lysine 197, glutamate 314, and 340 to 343; that span reads GGDT.

This sequence belongs to the phosphoglycerate kinase family. As to quaternary structure, monomer.

It is found in the cytoplasm. It catalyses the reaction (2R)-3-phosphoglycerate + ATP = (2R)-3-phospho-glyceroyl phosphate + ADP. Its pathway is carbohydrate degradation; glycolysis; pyruvate from D-glyceraldehyde 3-phosphate: step 2/5. In Ruthia magnifica subsp. Calyptogena magnifica, this protein is Phosphoglycerate kinase.